Reading from the N-terminus, the 320-residue chain is MMEIANVSSPEVFVLLGFSTRPSLETVLFIVVLSFYMVSILGNGIIILVSHTDVHLHTPMYFFLANLPFLDMSFTTSIVPQLLANLWGPQKTISYGGCVVQFYISHWLGATECVLLATMSYDRYAAICRPLHYTVIMHPQLCLGLALASWLGGLTTSMVGSTLTMLLPLCGNNCIDHFFCEMPLIMQLACVDTSLNEMEMYLASFVFVVLPLGLILVSYGHIARAVLKIRSAEGRRKAFNTCSSHVAVVSLFYGSIIFMYLQPAKSTSHEQGKFIALFYTVVTPALNPLIYTLRNTEVKSALRHMVLENCCGSAGKLAQI.

Topologically, residues 1 to 26 are extracellular; that stretch reads MMEIANVSSPEVFVLLGFSTRPSLET. Residue asparagine 6 is glycosylated (N-linked (GlcNAc...) asparagine). The chain crosses the membrane as a helical span at residues 27–50; that stretch reads VLFIVVLSFYMVSILGNGIIILVS. Residues 51–58 lie on the Cytoplasmic side of the membrane; that stretch reads HTDVHLHT. The chain crosses the membrane as a helical span at residues 59 to 80; the sequence is PMYFFLANLPFLDMSFTTSIVP. Residues 81–101 lie on the Extracellular side of the membrane; the sequence is QLLANLWGPQKTISYGGCVVQ. Residues cysteine 98 and cysteine 190 are joined by a disulfide bond. The helical transmembrane segment at 102–121 threads the bilayer; that stretch reads FYISHWLGATECVLLATMSY. The Cytoplasmic segment spans residues 122 to 140; that stretch reads DRYAAICRPLHYTVIMHPQ. Residues 141 to 159 form a helical membrane-spanning segment; that stretch reads LCLGLALASWLGGLTTSMV. Residues 160–196 are Extracellular-facing; that stretch reads GSTLTMLLPLCGNNCIDHFFCEMPLIMQLACVDTSLN. Residues 197–220 traverse the membrane as a helical segment; the sequence is EMEMYLASFVFVVLPLGLILVSYG. The Cytoplasmic segment spans residues 221-237; the sequence is HIARAVLKIRSAEGRRK. Residues 238 to 260 form a helical membrane-spanning segment; sequence AFNTCSSHVAVVSLFYGSIIFMY. Residues 261 to 273 are Extracellular-facing; it reads LQPAKSTSHEQGK. The helical transmembrane segment at 274-293 threads the bilayer; it reads FIALFYTVVTPALNPLIYTL. The Cytoplasmic segment spans residues 294–320; that stretch reads RNTEVKSALRHMVLENCCGSAGKLAQI.

This sequence belongs to the G-protein coupled receptor 1 family.

Its subcellular location is the cell membrane. Odorant receptor. The protein is Olfactory receptor 2C3 (OR2C3) of Homo sapiens (Human).